A 545-amino-acid polypeptide reads, in one-letter code: Propane 2-monooxygenase, hydroxylase component large subunit (545 aa).

Fe cation contacts are provided by Glu-97, Glu-127, His-130, Glu-192, Glu-226, and His-229.

Belongs to the TmoA/XamoA family. The propane 2-monooxygenase multicomponent enzyme system is composed of an electron transfer component and a monooxygenase component interacting with the effector protein PrmD. The electron transfer component is composed of a reductase (PrmB), and the monooxygenase component is formed by a large subunit (PrmA) and a small subunit (PrmC). Probably requires the presence of the chaperonin-like protein PrmG to ensure a productive folding, resulting of a soluble PrmA, which leads to the active form of PrmABCD. Requires Fe(2+) as cofactor.

The enzyme catalyses propane + NADH + O2 + H(+) = propan-2-ol + NAD(+) + H2O. It catalyses the reaction phenol + NADH + O2 + H(+) = hydroquinone + NAD(+) + H2O. Component of the propane 2-monooxygenase multicomponent enzyme system which is involved in the degradation of propane via the O2-dependent hydroxylation of propane. Under acetone induction, also able to catalyze the oxidation of phenol to yield hydroquinone. The polypeptide is Propane 2-monooxygenase, hydroxylase component large subunit (Gordonia sp. (strain TY-5)).